A 115-amino-acid polypeptide reads, in one-letter code: Probable prefoldin subunit 1 (115 aa).

The protein belongs to the prefoldin subunit beta family. Heterohexamer of two PFD-alpha type and four PFD-beta type subunits.

Functionally, binds specifically to cytosolic chaperonin (c-CPN) and transfers target proteins to it. Binds to nascent polypeptide chain and promotes folding in an environment in which there are many competing pathways for nonnative proteins. This chain is Probable prefoldin subunit 1 (pfdn1), found in Dictyostelium discoideum (Social amoeba).